We begin with the raw amino-acid sequence, 340 residues long: Cysteinyl leukotriene receptor 1 (340 aa).

Over 1 to 31 the chain is Extracellular; it reads MDETGNPTIPPASNNTCYDSIDDFRNQVYST. An N-linked (GlcNAc...) asparagine glycan is attached at Asn-14. Residues 32–52 traverse the membrane as a helical segment; it reads LYSMISVVGFFGNGFVLYVLV. At 53–60 the chain is on the cytoplasmic side; it reads KTYHEKSA. Residues 61–81 form a helical membrane-spanning segment; sequence FQVYMINLAVADLLCVCTLPL. At 82–109 the chain is on the extracellular side; that stretch reads RVAYYVHKGIWLFGDFLCRLSTYALYVN. A disulfide bridge connects residues Cys-99 and Cys-176. The chain crosses the membrane as a helical span at residues 110-130; the sequence is LYCSIFFMTAMSFFRCVAIVF. At 131 to 144 the chain is on the cytoplasmic side; the sequence is PVQNISLVTQKKAR. Residues 145-165 form a helical membrane-spanning segment; the sequence is LVCIAIWMFVILTSSPFLMAN. At 166–196 the chain is on the extracellular side; it reads TYKDEKNNTKCFEPPQDNQAKNYVLILHYVS. Residue Asn-172 is glycosylated (N-linked (GlcNAc...) asparagine). Residues 197–217 traverse the membrane as a helical segment; it reads LFIGFIIPFITIIVCYTMIIF. The Cytoplasmic segment spans residues 218–233; the sequence is TLLKSSMKKNLSSRKR. The helical transmembrane segment at 234–254 threads the bilayer; it reads AIGMIIVVTAAFLVSFMPYHI. At 255 to 279 the chain is on the extracellular side; it reads QRTIHLHFLHNKTKPCDSILRMQKS. A glycan (N-linked (GlcNAc...) asparagine) is linked at Asn-265. Residues 280–300 traverse the membrane as a helical segment; that stretch reads VVITLSLAASNCCFDPLLYFF. The Cytoplasmic portion of the chain corresponds to 301–340; that stretch reads SGGNFRRRLSTIRKYSLSSMTYIPKKKTSLPQKGKDICKE.

This sequence belongs to the G-protein coupled receptor 1 family.

The protein resides in the cell membrane. Its function is as follows. Receptor for cysteinyl leukotrienes mediating bronchoconstriction of individuals with and without asthma. Stimulation by LTD4 results in the contraction and proliferation of smooth muscle, edema, eosinophil migration and damage to the mucus layer in the lung. This response is mediated via a G-protein that activates a phosphatidylinositol-calcium second messenger system. This chain is Cysteinyl leukotriene receptor 1 (CYSLTR1), found in Cavia porcellus (Guinea pig).